A 310-amino-acid chain; its full sequence is UPF0761 membrane protein VF_0100 (310 aa).

6 consecutive transmembrane segments (helical) span residues 34–54, 97–117, 136–156, 178–198, 207–227, and 242–262; these read YMAYITLLSLVPLITVLLSVL, MTAVGSGFLFVASVMLISSID, FSLYWMILTLGPLLVGASLAA, LLGWLPIILSFSAFVGLYLLV, HALIGAMSAGCLFEFSKVGFA, and ALAAVPILFVWVYLCWIIVLI.

The protein belongs to the UPF0761 family.

Its subcellular location is the cell inner membrane. The protein is UPF0761 membrane protein VF_0100 of Aliivibrio fischeri (strain ATCC 700601 / ES114) (Vibrio fischeri).